Consider the following 445-residue polypeptide: Phosphoglucosamine mutase (445 aa).

S99 serves as the catalytic Phosphoserine intermediate. Residues S99, D242, D244, and D246 each coordinate Mg(2+). S99 carries the post-translational modification Phosphoserine.

Belongs to the phosphohexose mutase family. Requires Mg(2+) as cofactor. Post-translationally, activated by phosphorylation.

The catalysed reaction is alpha-D-glucosamine 1-phosphate = D-glucosamine 6-phosphate. Catalyzes the conversion of glucosamine-6-phosphate to glucosamine-1-phosphate. The sequence is that of Phosphoglucosamine mutase from Helicobacter pylori (strain HPAG1).